Reading from the N-terminus, the 157-residue chain is UPF0251 protein CLM_1546 (157 aa).

Belongs to the UPF0251 family.

This Clostridium botulinum (strain Kyoto / Type A2) protein is UPF0251 protein CLM_1546.